Consider the following 431-residue polypeptide: Glutamate-1-semialdehyde 2,1-aminomutase (431 aa).

At lysine 265 the chain carries N6-(pyridoxal phosphate)lysine.

This sequence belongs to the class-III pyridoxal-phosphate-dependent aminotransferase family. HemL subfamily. Homodimer. The cofactor is pyridoxal 5'-phosphate.

The protein localises to the cytoplasm. It carries out the reaction (S)-4-amino-5-oxopentanoate = 5-aminolevulinate. The protein operates within porphyrin-containing compound metabolism; protoporphyrin-IX biosynthesis; 5-aminolevulinate from L-glutamyl-tRNA(Glu): step 2/2. The polypeptide is Glutamate-1-semialdehyde 2,1-aminomutase (Aliivibrio salmonicida (strain LFI1238) (Vibrio salmonicida (strain LFI1238))).